The sequence spans 36 residues: Photosystem I reaction center subunit VIII (36 aa).

A helical membrane pass occupies residues 10–30 (FVPLVGLVFSAIIMVLSFLYI).

It belongs to the PsaI family.

It is found in the plastid. The protein localises to the chloroplast thylakoid membrane. In terms of biological role, may help in the organization of the PsaL subunit. The polypeptide is Photosystem I reaction center subunit VIII (Welwitschia mirabilis (Tree tumbo)).